Consider the following 525-residue polypeptide: MSNIHEHKILILDFGSQYTQLIARRIREIGVYCELWAWDVSEEQIREFAPNGIILAGGPESVTAENSPRAPEYVFNAGVPVLGICYGMQTMSEQLGGKVIQGVGEGEFGYAQVEVQTESALFKAIEDAVSETGKPLLDVWMSHGDKVSAIPEGFVAVAKTETCPFAAMANEDKQFYGVQFHPEVTHTRQGKRMLEHFALEICACAANWKPASIIEDAIERLKAQIGDDEVILGLSGGVDSSVVAMLLHRAIGDKLTCVFVDNGLLRLNEAEQVMEMFGDHFGLNIVHVDAENRFLDAMAGEAEPEAKRKIIGRVFVEIFDEESKKCVNAKWLAQGTIYPDVIESAGSATGKAHCIKSHHNVGGLPDDMEMGLVEPLRELFKDEVRKIGLELGLPYNMLYRHPFPGPGLGVRVLGEVKKEYCDLLRLADAIFIEELHKADLYNKVSQAFTVFLPVRSVGVMGDGRKYDWVVSLRAVETIDFMTAHWAHLPYDFLGRVSNRIINEVNGISRVVYDISGKPPATIEWE.

In terms of domain architecture, Glutamine amidotransferase type-1 spans 8 to 207 (KILILDFGSQ…ALEICACAAN (200 aa)). The active-site Nucleophile is cysteine 85. Active-site residues include histidine 181 and glutamate 183. The GMPS ATP-PPase domain maps to 208-400 (WKPASIIEDA…LGLPYNMLYR (193 aa)). 235–241 (SGGVDSS) is a binding site for ATP.

Homodimer.

It catalyses the reaction XMP + L-glutamine + ATP + H2O = GMP + L-glutamate + AMP + diphosphate + 2 H(+). It functions in the pathway purine metabolism; GMP biosynthesis; GMP from XMP (L-Gln route): step 1/1. Functionally, catalyzes the synthesis of GMP from XMP. This Shewanella halifaxensis (strain HAW-EB4) protein is GMP synthase [glutamine-hydrolyzing].